A 432-amino-acid polypeptide reads, in one-letter code: MGKSVVVLGAQWGDEGKGKIVDLLTDRVKYVVRYQGGHNAGHTLIINGEKTVLRLIPSGILRENVTCLIGNGVVLSPTALMQEMGELESRGINVRERLLISEACPLILPYHVAMDKARESALGNKAIGTTGRGIGPAYEDKVARRGLRVGDLFDKELFAEKLKNILDYYNFQLVHYYKAEAVDYQKTLDEVFAVADIITAMVADVSTILDIARKKGDNILFEGAQGTMLDIDQGTYPYVTSSNTTAGGVSTGAGFGPRHIDYVLGIIKAYCTRVGGGPFTTELFDDVGAEIARKGNEFGAVTGRPRRCGWFDAVAIKRAIQTNSISGFCMTKLDVLDGFHEIKICVGYKMPNGEIAEYAPLAAKDWEGVEPIYETLPGWQENTFGITDVNQLPENTRNYIKRIEEVTGVPIAILSTGPDRVETMILNDPFAV.

Residues 13–19 and 41–43 each bind GTP; these read GDEGKGK and GHT. Asp14 serves as the catalytic Proton acceptor. Positions 14 and 41 each coordinate Mg(2+). Residues 14-17, 39-42, Thr130, Arg144, Gln225, Thr240, and Arg304 each bind IMP; these read DEGK and NAGH. The active-site Proton donor is the His42. Substrate is bound at residue 300-306; that stretch reads AVTGRPR. GTP contacts are provided by residues Arg306, 332-334, and 415-417; these read KLD and STG.

This sequence belongs to the adenylosuccinate synthetase family. Homodimer. Mg(2+) serves as cofactor.

It localises to the cytoplasm. It carries out the reaction IMP + L-aspartate + GTP = N(6)-(1,2-dicarboxyethyl)-AMP + GDP + phosphate + 2 H(+). Its pathway is purine metabolism; AMP biosynthesis via de novo pathway; AMP from IMP: step 1/2. Plays an important role in the de novo pathway of purine nucleotide biosynthesis. Catalyzes the first committed step in the biosynthesis of AMP from IMP. This chain is Adenylosuccinate synthetase, found in Histophilus somni (strain 129Pt) (Haemophilus somnus).